The primary structure comprises 611 residues: Chaperone protein HtpG (611 aa).

Residues 1-326 (MSETLERHAF…TEDLPLNVSR (326 aa)) are a; substrate-binding. The b stretch occupies residues 327–536 (EMLQATPVLA…SGGPDLQMQR (210 aa)). The segment at 537–611 (LLRRAGRGFG…RVAAALAAQA (75 aa)) is c.

It belongs to the heat shock protein 90 family. In terms of assembly, homodimer.

It is found in the cytoplasm. Its function is as follows. Molecular chaperone. Has ATPase activity. This Methylobacterium sp. (strain 4-46) protein is Chaperone protein HtpG.